The following is a 318-amino-acid chain: 4-diphosphocytidyl-2-C-methyl-D-erythritol kinase (318 aa).

K25 is a catalytic residue. 110–120 (PVAGGMAGGSA) contributes to the ATP binding site. The active site involves D152.

Belongs to the GHMP kinase family. IspE subfamily.

It catalyses the reaction 4-CDP-2-C-methyl-D-erythritol + ATP = 4-CDP-2-C-methyl-D-erythritol 2-phosphate + ADP + H(+). It participates in isoprenoid biosynthesis; isopentenyl diphosphate biosynthesis via DXP pathway; isopentenyl diphosphate from 1-deoxy-D-xylulose 5-phosphate: step 3/6. Its function is as follows. Catalyzes the phosphorylation of the position 2 hydroxy group of 4-diphosphocytidyl-2C-methyl-D-erythritol. In Mycobacterium tuberculosis (strain ATCC 25177 / H37Ra), this protein is 4-diphosphocytidyl-2-C-methyl-D-erythritol kinase.